We begin with the raw amino-acid sequence, 267 residues long: Aspartate/glutamate leucyltransferase (267 aa).

The disordered stretch occupies residues 246 to 267; that stretch reads EQEEQTRPLFRPSATGFSTGQE.

This sequence belongs to the R-transferase family. Bpt subfamily.

It is found in the cytoplasm. The catalysed reaction is N-terminal L-glutamyl-[protein] + L-leucyl-tRNA(Leu) = N-terminal L-leucyl-L-glutamyl-[protein] + tRNA(Leu) + H(+). It catalyses the reaction N-terminal L-aspartyl-[protein] + L-leucyl-tRNA(Leu) = N-terminal L-leucyl-L-aspartyl-[protein] + tRNA(Leu) + H(+). In terms of biological role, functions in the N-end rule pathway of protein degradation where it conjugates Leu from its aminoacyl-tRNA to the N-termini of proteins containing an N-terminal aspartate or glutamate. In Granulibacter bethesdensis (strain ATCC BAA-1260 / CGDNIH1), this protein is Aspartate/glutamate leucyltransferase.